The sequence spans 350 residues: Secreted effector protein PipB2 (350 aa).

Pentapeptide repeat domains lie at 162–201, 202–241, 247–286, and 287–326; these read ANLTSENLCDADLSGANLEGAVLFMADCEGANFKGANLSG, TSLGDSNFKNACLEDSIMCGATLDHANLTGANLQHASLLG, CNCSGANMDHTNLSGATLIRADMSGATLQGATIMAAIMEG, and AVLTRANLRKASFISTNLDGADLAEANLNNTCFKDCTLTD.

In terms of assembly, interacts with the host kinesin light chain (KLC), a subunit of the kinesin-1 motor complex.

It localises to the secreted. It is found in the host membrane. Its function is as follows. Effector proteins function to alter host cell physiology and promote bacterial survival in host tissues. Involved in the reorganization of late endosome/lysosome (LE/Lys) compartments in mammalian cells. Necessary and sufficient to link kinesin-1 onto the Salmonella-containing vacuole (SCV) membrane. Required for centrifugal extension of lysosomal glycoprotein-rich membrane tubules, known as Salmonella-induced filaments (Sifs), away from the SCV and toward the cell periphery. Required for virulence, but not for intracellular survival and replication in phagocytic cells. The polypeptide is Secreted effector protein PipB2 (pipB2) (Salmonella typhimurium (strain LT2 / SGSC1412 / ATCC 700720)).